A 351-amino-acid polypeptide reads, in one-letter code: DNA integrity scanning protein DisA (351 aa).

The DAC domain occupies Arg-4–Phe-142. Residues Gly-71, Leu-89, and Thr-102 to Thr-106 each bind ATP.

This sequence belongs to the DisA family. As to quaternary structure, homooctamer. The cofactor is Mg(2+).

The enzyme catalyses 2 ATP = 3',3'-c-di-AMP + 2 diphosphate. Participates in a DNA-damage check-point that is active prior to asymmetric division when DNA is damaged. DisA forms globular foci that rapidly scan along the chromosomes during sporulation, searching for lesions. When a lesion is present, DisA pauses at the lesion site. This triggers a cellular response that culminates in a temporary block in sporulation initiation. In terms of biological role, also has diadenylate cyclase activity, catalyzing the condensation of 2 ATP molecules into cyclic di-AMP (c-di-AMP). c-di-AMP acts as a signaling molecule that couples DNA integrity with progression of sporulation. The rise in c-di-AMP level generated by DisA while scanning the chromosome, operates as a positive signal that advances sporulation; upon encountering a lesion, the DisA focus arrests at the damaged site and halts c-di-AMP synthesis. This chain is DNA integrity scanning protein DisA, found in Symbiobacterium thermophilum (strain DSM 24528 / JCM 14929 / IAM 14863 / T).